Reading from the N-terminus, the 146-residue chain is UPF0178 protein Lin1493 (146 aa).

It belongs to the UPF0178 family.

This chain is UPF0178 protein Lin1493, found in Listeria innocua serovar 6a (strain ATCC BAA-680 / CLIP 11262).